The sequence spans 161 residues: RNA pyrophosphohydrolase (161 aa).

The Nudix hydrolase domain occupies 12–154 (PYRPGVGMMI…KRKLYQAVVK (143 aa)). The Nudix box motif lies at 46 to 67 (GGIVPGETPSIAAMREMLEEIG).

It belongs to the Nudix hydrolase family. RppH subfamily. It depends on a divalent metal cation as a cofactor.

Functionally, accelerates the degradation of transcripts by removing pyrophosphate from the 5'-end of triphosphorylated RNA, leading to a more labile monophosphorylated state that can stimulate subsequent ribonuclease cleavage. In Rickettsia peacockii (strain Rustic), this protein is RNA pyrophosphohydrolase.